We begin with the raw amino-acid sequence, 701 residues long: A-type ATP synthase subunit I (701 aa).

Transmembrane regions (helical) follow at residues 340–360 (WEIS…GLMF), 363–379 (FGNA…FYRY), 388–408 (IPKL…TGLL), 435–455 (LYNL…LLPF), 468–488 (MIFS…LGVI), 498–518 (FLFL…FIFM), 555–575 (GIVW…AILV), 583–603 (WGSA…LLLL), 612–632 (VLVF…MAYL), and 649–669 (IIIL…VVFI).

Belongs to the V-ATPase 116 kDa subunit family. Has multiple subunits with at least A(3), B(3), C, D, E, F, H, I and proteolipid K(x).

Its subcellular location is the cell membrane. Component of the A-type ATP synthase that produces ATP from ADP in the presence of a proton gradient across the membrane. In Saccharolobus solfataricus (strain ATCC 35092 / DSM 1617 / JCM 11322 / P2) (Sulfolobus solfataricus), this protein is A-type ATP synthase subunit I.